Here is a 132-residue protein sequence, read N- to C-terminus: ATP synthase epsilon chain (132 aa).

The protein belongs to the ATPase epsilon chain family. As to quaternary structure, F-type ATPases have 2 components, CF(1) - the catalytic core - and CF(0) - the membrane proton channel. CF(1) has five subunits: alpha(3), beta(3), gamma(1), delta(1), epsilon(1). CF(0) has three main subunits: a, b and c.

The protein resides in the cell membrane. Its function is as follows. Produces ATP from ADP in the presence of a proton gradient across the membrane. This is ATP synthase epsilon chain (atpC) from Bacillus caldotenax.